Reading from the N-terminus, the 1157-residue chain is ATP-dependent helicase/deoxyribonuclease subunit B (1157 aa).

The UvrD-like helicase ATP-binding domain maps to 1-277; the sequence is MTLQIIAGKS…KLFLENKRAK (277 aa). Residue 8-15 coordinates ATP; that stretch reads GKSGTGKT. The UvrD-like helicase C-terminal domain occupies 272 to 578; sequence ENKRAKSDSL…EFSLLPPSLD (307 aa). The [4Fe-4S] cluster site is built by Cys794, Cys1115, Cys1118, and Cys1124.

Belongs to the helicase family. AddB/RexB type 1 subfamily. Heterodimer of AddA and AddB. It depends on Mg(2+) as a cofactor. [4Fe-4S] cluster serves as cofactor.

Its function is as follows. The heterodimer acts as both an ATP-dependent DNA helicase and an ATP-dependent, dual-direction single-stranded exonuclease. Recognizes the chi site generating a DNA molecule suitable for the initiation of homologous recombination. The AddB subunit has 5' -&gt; 3' nuclease activity but not helicase activity. This is ATP-dependent helicase/deoxyribonuclease subunit B from Listeria welshimeri serovar 6b (strain ATCC 35897 / DSM 20650 / CCUG 15529 / CIP 8149 / NCTC 11857 / SLCC 5334 / V8).